The following is a 504-amino-acid chain: Cytochrome P450 6a9 (504 aa).

C449 contributes to the heme binding site.

It belongs to the cytochrome P450 family. It depends on heme as a cofactor.

Its subcellular location is the endoplasmic reticulum membrane. It is found in the microsome membrane. In terms of biological role, involved in the metabolism of insect hormones and in the breakdown of synthetic insecticides. The sequence is that of Cytochrome P450 6a9 (Cyp6a9) from Drosophila melanogaster (Fruit fly).